The following is a 402-amino-acid chain: Phosphoglycerate kinase (402 aa).

Substrate-binding positions include 24 to 26, Arg-40, 63 to 66, Arg-122, and Arg-155; these read DFN and HFGR. ATP contacts are provided by residues Lys-206, Gly-297, Glu-328, and 357–360; that span reads GGDS.

Belongs to the phosphoglycerate kinase family. Monomer.

The protein resides in the cytoplasm. The enzyme catalyses (2R)-3-phosphoglycerate + ATP = (2R)-3-phospho-glyceroyl phosphate + ADP. The protein operates within carbohydrate degradation; glycolysis; pyruvate from D-glyceraldehyde 3-phosphate: step 2/5. This chain is Phosphoglycerate kinase, found in Synechococcus elongatus (strain ATCC 33912 / PCC 7942 / FACHB-805) (Anacystis nidulans R2).